The chain runs to 538 residues: uncharacterized protein (538 aa).

The span at 1-13 (MYNNNSSTSSDSS) shows a compositional bias: low complexity. The disordered stretch occupies residues 1–43 (MYNNNSSTSSDSSNSEEKANAQHASSTDSTSEHTDPAVADEGF). Helical transmembrane passes span 97–117 (ILHV…SSVF), 134–154 (VALL…ILWA), 163–183 (KIPL…VAVA), 194–214 (FFSG…FADM), 226–246 (IFAC…GFLA), 254–274 (WTEY…LFMK), 328–348 (PIVF…YLLL), 367–387 (ALPY…IAYF), 408–428 (LPPM…LAWS), 434–454 (VHWI…LTIF), 458–478 (LIYL…ANTI), and 504–524 (GSLL…FFIF).

This sequence belongs to the major facilitator superfamily. CAR1 family.

It is found in the endoplasmic reticulum. It localises to the membrane. This is an uncharacterized protein from Schizosaccharomyces pombe (strain 972 / ATCC 24843) (Fission yeast).